Here is a 216-residue protein sequence, read N- to C-terminus: MRIIMIGPPGSGKGTQTQLLSKYFHIPCISTGEILRKEIKKNKKTKKYIKKTINKGKLIKNSFIIKIIEKNIKKKKFFNGFILDGFPRNIEQAKSLSKKINIEYIIYLKIKYDDIIKRITGRLIHASSGRTYHKIFNPPKIKNKDDITQEKLCSRNDDNEKTIKIRLQEYKKHTNPLIKWIKKKKKIKFIEIHANQSIKIVNKKIIYNINNNNINK.

10–15 is a binding site for ATP; sequence GSGKGT. Residues 30 to 59 form an NMP region; sequence STGEILRKEIKKNKKTKKYIKKTINKGKLI. AMP-binding positions include Thr-31, Arg-36, 57–59, 85–88, and Gln-92; these read KLI and GFPR. An LID region spans residues 121-158; sequence GRLIHASSGRTYHKIFNPPKIKNKDDITQEKLCSRNDD. ATP is bound by residues Arg-122 and 131–132; that span reads TY. Arg-155 and Arg-166 together coordinate AMP. Gln-196 contributes to the ATP binding site.

The protein belongs to the adenylate kinase family. Monomer.

It is found in the cytoplasm. It catalyses the reaction AMP + ATP = 2 ADP. The protein operates within purine metabolism; AMP biosynthesis via salvage pathway; AMP from ADP: step 1/1. In terms of biological role, catalyzes the reversible transfer of the terminal phosphate group between ATP and AMP. Plays an important role in cellular energy homeostasis and in adenine nucleotide metabolism. The chain is Adenylate kinase from Buchnera aphidicola subsp. Cinara cedri (strain Cc).